We begin with the raw amino-acid sequence, 128 residues long: Large ribosomal subunit protein uL22 (128 aa).

Belongs to the universal ribosomal protein uL22 family. In terms of assembly, part of the 50S ribosomal subunit.

Functionally, this protein binds specifically to 23S rRNA; its binding is stimulated by other ribosomal proteins, e.g. L4, L17, and L20. It is important during the early stages of 50S assembly. It makes multiple contacts with different domains of the 23S rRNA in the assembled 50S subunit and ribosome. In terms of biological role, the globular domain of the protein is located near the polypeptide exit tunnel on the outside of the subunit, while an extended beta-hairpin is found that lines the wall of the exit tunnel in the center of the 70S ribosome. The protein is Large ribosomal subunit protein uL22 of Methylocella silvestris (strain DSM 15510 / CIP 108128 / LMG 27833 / NCIMB 13906 / BL2).